Consider the following 954-residue polypeptide: E3 ubiquitin-protein ligase arkadia (954 aa).

Over residues 50–66 (LCSDTNKQQRDLNSNGT) the composition is skewed to polar residues. Disordered regions lie at residues 50–175 (LCSD…VSSL) and 193–276 (RKRF…SGGM). Composition is skewed to low complexity over residues 112 to 131 (SSFS…GDSD) and 232 to 251 (SSSS…SSST). Residues 280 to 284 (VVVIE) carry the SUMO interaction motif 1 (SIM) motif. An SUMO interaction motif 2 (SIM) motif is present at residues 305–311 (EVEIVTV). Disordered stretches follow at residues 318–346 (RTTL…RNRV), 364–452 (TVDE…MPRL), and 485–509 (HFPH…SFRD). Residues 328-337 (WGQNTQSGRT) show a composition bias toward polar residues. The SUMO interaction motif 3 (SIM) motif lies at 360-364 (VVDLT). The span at 385-395 (VSTVSSNTSTS) shows a compositional bias: low complexity. A compositionally biased stretch (basic residues) spans 485-496 (HFPHHHHHHHQS). Residues 867–869 (YPH) form a ubiquitin binding region. Zn(2+)-binding residues include cysteine 902 and cysteine 905. The RING-type; atypical zinc finger occupies 902–943 (CTICLSILEEGEDVRRLPCMHLFHQVCVDQWLITNKKCPICR). The ubiquitin binding stretch occupies residues 917–921 (RLPCM). 2 residues coordinate Zn(2+): histidine 925 and cysteine 928.

The protein belongs to the Arkadia family. In terms of assembly, monomer.

It is found in the nucleus. It localises to the cytoplasm. Its subcellular location is the PML body. The enzyme catalyses S-ubiquitinyl-[E2 ubiquitin-conjugating enzyme]-L-cysteine + [acceptor protein]-L-lysine = [E2 ubiquitin-conjugating enzyme]-L-cysteine + N(6)-ubiquitinyl-[acceptor protein]-L-lysine.. It participates in protein modification; protein ubiquitination. With respect to regulation, binds free ubiquitin non-covalently via its RING-type zinc finger. Ubiquitin-binding leads to enhance the E3 ubiquitin-protein ligase activity by stabilizing the ubiquitin-conjugating enzyme E2 (donor ubiquitin) in the 'closed' conformation and activating ubiquitin transfer. E3 ubiquitin-protein ligase required for mesoderm patterning during embryonic development. Acts as an enhancer of the transcriptional responses of the smad2/smad3 effectors, which are activated downstream of BMP. Acts by mediating ubiquitination and degradation of SMAD inhibitors such as smad7, inducing their proteasomal degradation and thereby enhancing the transcriptional activity of TGF-beta and BMP. Specifically binds polysumoylated chains via SUMO interaction motifs (SIMs) and mediates ubiquitination of sumoylated substrates. The regulation of the BMP-SMAD signaling is however independent of sumoylation and is not dependent of SUMO interaction motifs (SIMs). The chain is E3 ubiquitin-protein ligase arkadia (rnf111) from Xenopus tropicalis (Western clawed frog).